The following is a 254-amino-acid chain: 4-hydroxy-tetrahydrodipicolinate reductase (254 aa).

Residue 7-12 (GASGRI) coordinates NAD(+). An NADP(+)-binding site is contributed by R35. NAD(+)-binding positions include 91-93 (GTT) and 115-118 (AHNM). The Proton donor/acceptor role is filled by H147. A (S)-2,3,4,5-tetrahydrodipicolinate-binding site is contributed by H148. The active-site Proton donor is the K151. 157–158 (GT) lines the (S)-2,3,4,5-tetrahydrodipicolinate pocket.

Belongs to the DapB family.

Its subcellular location is the cytoplasm. The catalysed reaction is (S)-2,3,4,5-tetrahydrodipicolinate + NAD(+) + H2O = (2S,4S)-4-hydroxy-2,3,4,5-tetrahydrodipicolinate + NADH + H(+). It carries out the reaction (S)-2,3,4,5-tetrahydrodipicolinate + NADP(+) + H2O = (2S,4S)-4-hydroxy-2,3,4,5-tetrahydrodipicolinate + NADPH + H(+). It functions in the pathway amino-acid biosynthesis; L-lysine biosynthesis via DAP pathway; (S)-tetrahydrodipicolinate from L-aspartate: step 4/4. Its function is as follows. Catalyzes the conversion of 4-hydroxy-tetrahydrodipicolinate (HTPA) to tetrahydrodipicolinate. This chain is 4-hydroxy-tetrahydrodipicolinate reductase, found in Helicobacter pylori (strain P12).